The chain runs to 515 residues: G-protein coupled receptor 176 (515 aa).

Topologically, residues 1–41 (MGHNSSWVSPNTSHPRNTSGAEAGANLSAFGELSEAQLYRQ) are extracellular. Residues Asn-4, Asn-11, Asn-17, and Asn-26 are each glycosylated (N-linked (GlcNAc...) asparagine). Residues 42-64 (FTTTVQVVIFIGSLLGNFMVLWS) traverse the membrane as a helical segment. At 65–77 (TCRTTVFKSVTNR) the chain is on the cytoplasmic side. The helical transmembrane segment at 78–98 (FIKNLACSGICASVVCVPFDI) threads the bilayer. Over 99–108 (ILSSSPHCCW) the chain is Extracellular. The chain crosses the membrane as a helical span at residues 109 to 129 (WIYTMLFCKVLKFLHKVFCSV). Over 130–157 (TVLSFPAIALDRYYSVLYPLERKISDAK) the chain is Cytoplasmic. Residues 158–177 (SRELVMYIWAHAVVASVPVF) form a helical membrane-spanning segment. Residues 178–204 (AVTNVADIYAMSTCTEVWSNSLGHLVY) lie on the Extracellular side of the membrane. Residues 205 to 225 (VLIYNVTTVIVPVAVVFLFLI) traverse the membrane as a helical segment. Residues 226–264 (LIRRALSASQKKKVIIAALRTPQNTISIPYASQREAELH) are Cytoplasmic-facing. A helical transmembrane segment spans residues 265 to 285 (ATLLSMVTVFILCSVPYATLV). Topologically, residues 286–301 (VYQTVLNVPNTSVFLL) are extracellular. A helical membrane pass occupies residues 302–322 (LTAIWLPKVSLLANPVLFLTV). Topologically, residues 323-515 (NKSVRKCLVG…KVSIFPKVDS (193 aa)) are cytoplasmic. The tract at residues 407–435 (SCPEGEQEPPQLAPSVPPPGTVDSEPRVS) is disordered. Positions 417-426 (QLAPSVPPPG) are enriched in pro residues.

This sequence belongs to the G-protein coupled receptor 1 family. As to expression, expressed mainly in the brain, with prominent expression in the SCN (at protein level).

The protein localises to the cell membrane. Its function is as follows. Orphan receptor involved in normal circadian rhythm behavior. Acts through the G-protein subclass G(z)-alpha and has an agonist-independent basal activity to repress cAMP production. This Mus musculus (Mouse) protein is G-protein coupled receptor 176 (Gpr176).